Consider the following 125-residue polypeptide: UPF0389 protein CG9231 (125 aa).

The chain crosses the membrane as a helical span at residues 69-88 (IRLANIMIALTAVGCAIMVY). A glycan (N-linked (GlcNAc...) asparagine) is linked at Asn112.

It belongs to the UPF0389 family.

The protein resides in the membrane. This is UPF0389 protein CG9231 from Drosophila melanogaster (Fruit fly).